The chain runs to 418 residues: Aspartate aminotransferase 1 (418 aa).

Lysine 264 carries the N6-(pyridoxal phosphate)lysine modification.

This sequence belongs to the class-I pyridoxal-phosphate-dependent aminotransferase family. As to quaternary structure, homodimer. It depends on pyridoxal 5'-phosphate as a cofactor. Nodules, roots, stems and leaves, in decreasing order of aspartate aminotransferase 1 concentration. Is the predominant aspartate aminotransferase isoenzyme in roots.

It localises to the cytoplasm. The enzyme catalyses L-aspartate + 2-oxoglutarate = oxaloacetate + L-glutamate. Its function is as follows. Important for the metabolism of amino acids and Krebs-cycle related organic acids. In plants, it is involved in nitrogen metabolism and in aspects of carbon and energy metabolism. This chain is Aspartate aminotransferase 1 (AAT-1), found in Medicago sativa (Alfalfa).